Reading from the N-terminus, the 288-residue chain is 30 kDa spicule matrix protein (288 aa).

Positions 1–20 (MRCFVYVLVCVVASVSYSRA) are cleaved as a signal peptide. The C-type lectin domain maps to 93-163 (ANMYCGQMHP…YTNWEGMVAP (71 aa)). N103 is a glycosylation site (N-linked (GlcNAc...) asparagine).

As to expression, spines and tube feet.

Its function is as follows. Matrix protein of the sea urchin embryo spicule. The function of the matrix proteins is to direct crystal growth in certain orientations and inhibit growth in others. The polypeptide is 30 kDa spicule matrix protein (SM30) (Hemicentrotus pulcherrimus (Sea urchin)).